Reading from the N-terminus, the 165-residue chain is Large ribosomal subunit protein uL10 (165 aa).

This sequence belongs to the universal ribosomal protein uL10 family. As to quaternary structure, part of the ribosomal stalk of the 50S ribosomal subunit. The N-terminus interacts with L11 and the large rRNA to form the base of the stalk. The C-terminus forms an elongated spine to which L12 dimers bind in a sequential fashion forming a multimeric L10(L12)X complex.

In terms of biological role, forms part of the ribosomal stalk, playing a central role in the interaction of the ribosome with GTP-bound translation factors. The sequence is that of Large ribosomal subunit protein uL10 from Mycoplasma mycoides subsp. mycoides SC (strain CCUG 32753 / NCTC 10114 / PG1).